Consider the following 534-residue polypeptide: MGLRLLFSLICVFCISNIFTQAFLVHQIYGNSSFTKISLNQLEGRDSQEELQRRQEIRYYGRAAETGGTPTYYGYATPTSSSEPSIFSESATPSETNSYSSPVSSYSDPATSQLPSSTSFFSPTSSEYTPSSTESSSLLDPSSVSSAILPSSTSVEVSISSSSLSSSDPLTSSTFSSLSSSTSSSQPSVSSTSSSTFSSAAPTSTSSSYLSSSSVVSSSSSPSSSSSSTLTSSSLSTSSIPSTSSSSSSTSSSLSSSSSSSTASSSSSSSSIISSSSSSSSSPTSTSSTISSSSSSSSSPTSTSSTISSSSSSSSSFSSTLSSSSMSSSSSFSSSPTSSSSTISSSSSSPSSSSFSSTTSSSKSSSSFSSTVSSSSSTSSSTLTSSSSSSSRPASSSSHSSSLSSHKSSSSSKSSSAPVSSAFYHNSTSSRSSSHSSSHSLSSLSSKPILTASSSSLLTSSSHTYERSTVYVVTVETVSSGSSTYASQSTQTSILLVIVGDSSSTDSSGASSTHSKTSIFFSLFVVLAAAIVII.

Residues 1–22 (MGLRLLFSLICVFCISNIFTQA) form the signal peptide. Residue asparagine 31 is glycosylated (N-linked (GlcNAc...) asparagine). 2 disordered regions span residues 70 to 145 (PTYY…SSVS) and 176 to 418 (SSLS…SSAP). A glycan (N-linked (GlcNAc...) asparagine) is linked at asparagine 426.

It is found in the endoplasmic reticulum. The protein localises to the cell membrane. This is an uncharacterized protein from Schizosaccharomyces pombe (strain 972 / ATCC 24843) (Fission yeast).